The sequence spans 433 residues: ATP-sensitive inward rectifier potassium channel 12 (433 aa).

Over 1 to 77 (MTAASRANPY…LADMFTTCVD (77 aa)) the chain is Cytoplasmic. Cys-75 carries the post-translational modification S-nitrosocysteine. A helical transmembrane segment spans residues 78 to 104 (IRWRYMLLIFSLAFLASWLLFGIIFWV). A 1,2-diacyl-sn-glycero-3-phospho-(1D-myo-inositol-4,5-bisphosphate)-binding residues include Arg-79 and Arg-81. The Extracellular portion of the chain corresponds to 105–129 (IAVAHGDLEPAEGRGRTPCVMQVHG). Cys-123 and Cys-155 are disulfide-bonded. An intramembrane region (helical; Pore-forming) is located at residues 130–146 (FMAAFLFSIETQTTIGY). K(+)-binding residues include Thr-143, Ile-144, Gly-145, and Tyr-146. Positions 143–148 (TIGYGL) match the Selectivity filter motif. The Extracellular portion of the chain corresponds to 147-155 (GLRCVTEEC). The helical transmembrane segment at 156–183 (PVAVFMVVAQSIVGCIIDSFMIGAIMAK) threads the bilayer. A 1,2-diacyl-sn-glycero-3-phospho-(1D-myo-inositol-4,5-bisphosphate) contacts are provided by Lys-183 and Lys-188. Topologically, residues 184–433 (MARPKKRAQT…QRPYRRESEI (250 aa)) are cytoplasmic. Residues 387-433 (DEEDEADGDQDGRSRDGLSPQARHDFDRLQAGGGVLEQRPYRRESEI) are disordered. Residues 396–414 (QDGRSRDGLSPQARHDFDR) are compositionally biased toward basic and acidic residues. The short motif at 431 to 433 (SEI) is the PDZ-binding element.

The protein belongs to the inward rectifier-type potassium channel (TC 1.A.2.1) family. KCNJ12 subfamily. In terms of assembly, homotetramer. Forms heteromer with KCNJ4. Can form heteromeric channels with Kir2.6/KCNJ18. Association, via its PDZ-recognition domain, with LIN7A, LIN7B, LIN7C, DLG1, CASK and APBA1 plays a key role in its localization and trafficking.

The protein resides in the membrane. Its subcellular location is the cell membrane. It is found in the sarcolemma. The protein localises to the T-tubule. It catalyses the reaction K(+)(in) = K(+)(out). Activated by phosphatidylinositol 4,5-biphosphate (PtdIns(4,5)P2). PtdIns(4,5)P2 binding to the cytoplasmic side of the channel triggers a conformation change leading to channel opening. Inhibited by Ba(2+). Its function is as follows. Inward rectifying potassium channel that probably participates in controlling the resting membrane potential in electrically excitable cells. Probably participates in establishing action potential waveform and excitability of neuronal and muscle tissues. Inward rectifier potassium channels are characterized by a greater tendency to allow potassium to flow into the cell rather than out of it. Their voltage dependence is regulated by the concentration of extracellular potassium; as external potassium is raised, the voltage range of the channel opening shifts to more positive voltages. The inward rectification is mainly due to the blockage of outward current by internal magnesium. This is ATP-sensitive inward rectifier potassium channel 12 (KCNJ12) from Homo sapiens (Human).